The following is a 465-amino-acid chain: Ribulose bisphosphate carboxylase large chain (465 aa).

At Lys-4 the chain carries N6,N6,N6-trimethyllysine. Asn-113 and Thr-163 together coordinate substrate. The Proton acceptor role is filled by Lys-165. Lys-167 lines the substrate pocket. Mg(2+) is bound by residues Lys-191, Asp-193, and Glu-194. Lys-191 is subject to N6-carboxylysine. His-284 serves as the catalytic Proton acceptor. The substrate site is built by Arg-285, His-317, and Ser-369.

This sequence belongs to the RuBisCO large chain family. Type I subfamily. As to quaternary structure, heterohexadecamer of 8 large chains and 8 small chains; disulfide-linked. The disulfide link is formed within the large subunit homodimers. Requires Mg(2+) as cofactor. The disulfide bond which can form in the large chain dimeric partners within the hexadecamer appears to be associated with oxidative stress and protein turnover.

The protein resides in the plastid. Its subcellular location is the chloroplast. The catalysed reaction is 2 (2R)-3-phosphoglycerate + 2 H(+) = D-ribulose 1,5-bisphosphate + CO2 + H2O. It carries out the reaction D-ribulose 1,5-bisphosphate + O2 = 2-phosphoglycolate + (2R)-3-phosphoglycerate + 2 H(+). Functionally, ruBisCO catalyzes two reactions: the carboxylation of D-ribulose 1,5-bisphosphate, the primary event in carbon dioxide fixation, as well as the oxidative fragmentation of the pentose substrate in the photorespiration process. Both reactions occur simultaneously and in competition at the same active site. The protein is Ribulose bisphosphate carboxylase large chain of Ulmus alata (Winged elm).